Consider the following 308-residue polypeptide: Cysteine synthase (308 aa).

N6-(pyridoxal phosphate)lysine is present on Lys45. Residues Asn75, 179-183 (GTGGT), and Ser267 each bind pyridoxal 5'-phosphate.

The protein belongs to the cysteine synthase/cystathionine beta-synthase family. As to quaternary structure, homodimer. Forms CymR(2):CysK(2) or CymR(4):CysK(4) complexes in the absence of O-acetylserine. It depends on pyridoxal 5'-phosphate as a cofactor.

It catalyses the reaction O-acetyl-L-serine + hydrogen sulfide = L-cysteine + acetate. It participates in amino-acid biosynthesis; L-cysteine biosynthesis; L-cysteine from L-serine: step 2/2. Functionally, catalyzes the conversion of O-acetylserine to cysteine. Also acts as a sensor of cysteine availability in the signal transduction pathway modulating CymR activity. When cysteine is present, the pool of O-acetylserine (OAS) is low, which leads to the formation of a CymR-CysK complex and transcriptional repression of the CymR regulon occurs. In the absence of cysteine, the OAS pool is high and the CymR-CysK complex is mostly dissociated, leading to a faster dissociation of CymR from its DNA targets and the lifting of CymR-dependent repression. The polypeptide is Cysteine synthase (cysK) (Bacillus subtilis (strain 168)).